A 118-amino-acid polypeptide reads, in one-letter code: MSQLKGQNLIESVNQHQLKDVPFFKPGDTVKVFIKIDEGNRKRVQIFEGLVIKRQGRLVTETFTVRKIFAGVGIELTFPVHSPTNEKIEVVRRGIVRRAKLHYVRNLSSKASRIKEQR.

Belongs to the bacterial ribosomal protein bL19 family.

This protein is located at the 30S-50S ribosomal subunit interface and may play a role in the structure and function of the aminoacyl-tRNA binding site. The protein is Large ribosomal subunit protein bL19 of Onion yellows phytoplasma (strain OY-M).